Consider the following 300-residue polypeptide: Cell surface glycoprotein CD200 receptor 1-A (300 aa).

An N-terminal signal peptide occupies residues 1–24; it reads MEIAGKAVCVFLLLAIIKLRRSEG. Residues 25-124 form the Ig-like V-type domain; sequence INRVSANLGH…GNFHRLYHLT (100 aa). Residues 25-213 lie on the Extracellular side of the membrane; the sequence is INRVSANLGH…SINCSSSYRD (189 aa). 2 cysteine pairs are disulfide-bonded: C40-C108 and C143-C192. 6 N-linked (GlcNAc...) asparagine glycosylation sites follow: N45, N76, N105, N171, N200, and N206. Residues 122-206 enclose the Ig-like C2-type domain; that stretch reads HLTVIVAPRM…ATLNETKSIN (85 aa). Residues 214–234 form a helical membrane-spanning segment; sequence LILCIAIILSFLIIITFMAVI. Over 235–300 the chain is Cytoplasmic; the sequence is YYLKLHGCRF…NLPQGQSPAT (66 aa).

The protein belongs to the CD200R family. Glycosylated. Post-translationally, phosphorylated. In terms of tissue distribution, highly expressed in macrophages, peripheral blood lymphocytes (PBL) and peripheral blood mononuclear cells (PBMC). Weakly expressed in bursa, thymus, spleen, liver and brain.

It localises to the membrane. Its subcellular location is the secreted. The sequence is that of Cell surface glycoprotein CD200 receptor 1-A (CD200R1A) from Gallus gallus (Chicken).